A 342-amino-acid polypeptide reads, in one-letter code: Acetoin:2,6-dichlorophenolindophenol oxidoreductase subunit beta (342 aa).

As to quaternary structure, tetramer of 2 alpha and 2 beta subunits.

It participates in ketone degradation; acetoin degradation. Functionally, catalyzes the 2,6-dichlorophenolindophenol-dependent cleavage of acetoin into acetate and acetaldehyde. This chain is Acetoin:2,6-dichlorophenolindophenol oxidoreductase subunit beta (acoB), found in Bacillus subtilis (strain 168).